A 552-amino-acid polypeptide reads, in one-letter code: Cytochrome c oxidase subunit 1 (552 aa).

Residues 35 to 55 traverse the membrane as a helical segment; it reads VIGIQYLVTAFIFYLIGGLMA. Histidine 82 lines the Fe(II)-heme a pocket. 6 helical membrane-spanning segments follow: residues 85–105, 120–140, 164–184, 211–231, 252–272, and 284–304; these read IMIF…YLVP, ALAF…FLFG, WILA…NFIV, LLAL…LFDI, LFWF…FGIM, and IFGY…GLFV. Histidine 258 and tyrosine 262 together coordinate Cu cation. Residues 258–262 constitute a cross-link (1'-histidyl-3'-tyrosine (His-Tyr)); sequence HPAVY. 2 residues coordinate Cu cation: histidine 307 and histidine 308. The next 5 helical transmembrane spans lie at 321 to 341, 355 to 375, 390 to 410, 426 to 446, and 470 to 490; these read FFTI…FSWV, MLFA…GVTL, VVAH…YAGI, LGIL…LPMH, and ICTI…INII. Residue histidine 393 coordinates heme a3. Histidine 395 lines the Fe(II)-heme a pocket.

This sequence belongs to the heme-copper respiratory oxidase family. Requires Cu(2+) as cofactor. Heme is required as a cofactor.

It is found in the cell membrane. It catalyses the reaction 4 Fe(II)-[cytochrome c] + O2 + 8 H(+)(in) = 4 Fe(III)-[cytochrome c] + 2 H2O + 4 H(+)(out). It functions in the pathway energy metabolism; oxidative phosphorylation. In terms of biological role, cytochrome c oxidase is the component of the respiratory chain that catalyzes the reduction of oxygen to water. Subunits 1-3 form the functional core of the enzyme complex. CO I is the catalytic subunit of the enzyme. Electrons originating in cytochrome c are transferred via the copper A center of subunit 2 and heme A of subunit 1 to the bimetallic center formed by heme A3 and copper B. This is Cytochrome c oxidase subunit 1 (ctaD) from Thermostichus vulcanus (Synechococcus vulcanus).